A 271-amino-acid polypeptide reads, in one-letter code: Phosphonates import ATP-binding protein PhnC 2 (271 aa).

Positions 2–245 (LVVEGLTCRF…IARELYDLEA (244 aa)) constitute an ABC transporter domain. 34 to 41 (GRSGAGKS) is a binding site for ATP.

Belongs to the ABC transporter superfamily. Phosphonates importer (TC 3.A.1.9.1) family. The complex is composed of two ATP-binding proteins (PhnC), two transmembrane proteins (PhnE) and a solute-binding protein (PhnD).

Its subcellular location is the cell inner membrane. It carries out the reaction phosphonate(out) + ATP + H2O = phosphonate(in) + ADP + phosphate + H(+). Part of the ABC transporter complex PhnCDE involved in phosphonates import. Responsible for energy coupling to the transport system. The polypeptide is Phosphonates import ATP-binding protein PhnC 2 (Rhodopseudomonas palustris (strain BisB18)).